Consider the following 86-residue polypeptide: Small ribosomal subunit protein bS16 (86 aa).

The protein belongs to the bacterial ribosomal protein bS16 family.

The chain is Small ribosomal subunit protein bS16 from Thermoanaerobacter pseudethanolicus (strain ATCC 33223 / 39E) (Clostridium thermohydrosulfuricum).